We begin with the raw amino-acid sequence, 213 residues long: 3-isopropylmalate dehydratase small subunit (213 aa).

This sequence belongs to the LeuD family. LeuD type 1 subfamily. Heterodimer of LeuC and LeuD.

The catalysed reaction is (2R,3S)-3-isopropylmalate = (2S)-2-isopropylmalate. The protein operates within amino-acid biosynthesis; L-leucine biosynthesis; L-leucine from 3-methyl-2-oxobutanoate: step 2/4. In terms of biological role, catalyzes the isomerization between 2-isopropylmalate and 3-isopropylmalate, via the formation of 2-isopropylmaleate. This is 3-isopropylmalate dehydratase small subunit from Neisseria gonorrhoeae (strain ATCC 700825 / FA 1090).